We begin with the raw amino-acid sequence, 1197 residues long: Sensor protein EvgS (1197 aa).

An N-terminal signal peptide occupies residues 1–21 (MKFLPYIFLLCCGLWSTISFA). Topologically, residues 22–325 (DEDYIEYRGI…SMTDENGSVR (304 aa)) are cytoplasmic. The chain crosses the membrane as a helical span at residues 326–346 (GVMGDILNIITLQTGLNFSPI). At 347-537 (TVSHNIHAGT…TWDLYSEQFY (191 aa)) the chain is on the periplasmic side. A helical transmembrane segment spans residues 538–558 (IVTTLSVLLVGSSLLWGFYLL). The Cytoplasmic segment spans residues 559-1197 (RSVRRRKVIQ…EIAVFCQKND (639 aa)). Residues 718–938 (TMSHEIRTPI…TFTITIPVEI (221 aa)) enclose the Histidine kinase domain. H721 bears the Phosphohistidine; by autocatalysis mark. In terms of domain architecture, Response regulatory spans 960 to 1074 (SILIADDHPT…VLKTHLSQLH (115 aa)). Position 1009 is a 4-aspartylphosphate (D1009). Positions 1098 to 1197 (DLQLMQEILM…EIAVFCQKND (100 aa)) constitute an HPt domain. At H1137 the chain carries Phosphohistidine.

Activation requires a sequential transfer of a phosphate group from a His in the primary transmitter domain, to an Asp in the receiver domain and to a His in the secondary transmitter domain.

The protein resides in the cell inner membrane. It catalyses the reaction ATP + protein L-histidine = ADP + protein N-phospho-L-histidine.. Its function is as follows. Member of the two-component regulatory system EvgS/EvgA. Phosphorylates EvgA via a four-step phosphorelay in response to environmental signals. The chain is Sensor protein EvgS (evgS) from Escherichia coli (strain K12).